A 780-amino-acid polypeptide reads, in one-letter code: Copper-exporting P-type ATPase (780 aa).

The HMA domain occupies 2 to 67 (QRIQLNITGM…AVRRAALCTD (66 aa)). Residues Cys13 and Cys16 each contribute to the Cu(+) site. The next 6 helical transmembrane spans lie at 89–109 (LAVA…FAVL), 114–134 (FPGW…WAAW), 153–173 (TLIS…VFGH), 185–205 (ALLG…VFVL), 348–368 (VFVP…LIAG), and 374–394 (VFSA…GLAT). The active-site 4-aspartylphosphate intermediate is the Asp430. 2 helical membrane-spanning segments follow: residues 680 to 698 (FNMV…IAAA) and 704 to 722 (LVAG…SNSL).

Belongs to the cation transport ATPase (P-type) (TC 3.A.3) family. Type IB subfamily.

It is found in the cell membrane. The catalysed reaction is Cu(+)(in) + ATP + H2O = Cu(+)(out) + ADP + phosphate + H(+). Its function is as follows. Involved in copper export. This chain is Copper-exporting P-type ATPase (ctpA), found in Mycobacterium leprae (strain TN).